The following is a 262-amino-acid chain: Hydroxyethylthiazole kinase (262 aa).

Met50 contributes to the substrate binding site. Positions 125 and 171 each coordinate ATP. Residue Gly198 coordinates substrate.

This sequence belongs to the Thz kinase family. Requires Mg(2+) as cofactor.

The enzyme catalyses 5-(2-hydroxyethyl)-4-methylthiazole + ATP = 4-methyl-5-(2-phosphooxyethyl)-thiazole + ADP + H(+). Its pathway is cofactor biosynthesis; thiamine diphosphate biosynthesis; 4-methyl-5-(2-phosphoethyl)-thiazole from 5-(2-hydroxyethyl)-4-methylthiazole: step 1/1. Functionally, catalyzes the phosphorylation of the hydroxyl group of 4-methyl-5-beta-hydroxyethylthiazole (THZ). In Escherichia coli (strain SMS-3-5 / SECEC), this protein is Hydroxyethylthiazole kinase.